Consider the following 585-residue polypeptide: Complement component C8 alpha chain (585 aa).

Positions 1–20 (MLVAAFFTLFLVTCQPAVTA) are cleaved as a signal peptide. A propeptide spanning residues 21–30 (QEKVNQRVNR) is cleaved from the precursor. The TSP type-1 1 domain maps to 38–91 (DCQLSSWSEWTDCFPCQDTKYRHRSLLQPNKFGGTICSGDIWDRASCYSPTACL). 7 disulfides stabilise this stretch: cysteine 39/cysteine 74, cysteine 50/cysteine 84, cysteine 53/cysteine 90, cysteine 96/cysteine 108, cysteine 102/cysteine 121, cysteine 115/cysteine 130, and cysteine 140/cysteine 177. C-linked (Man) tryptophan glycosylation is present at tryptophan 44. The LDL-receptor class A domain maps to 94–132 (AQCGQDFQCKETGRCLKRHLVCNGENDCLDGSDEDNCED). The Ca(2+) site is built by leucine 113, asparagine 116, glutamate 118, aspartate 120, aspartate 126, and glutamate 127. In terms of domain architecture, MACPF spans 136-499 (TESDCAQYDP…QYLMEFNACR (364 aa)). Beta stranded transmembrane passes span 248 to 256 (AGVTISAGL), 259 to 266 (SPLLGTVG), 377 to 384 (GGFGEIQY), and 391 to 396 (AQGILS). The cysteines at positions 375 and 400 are disulfide-linked. Asparagine 438 carries an N-linked (GlcNAc...) asparagine glycan. 4 disulfides stabilise this stretch: cysteine 498-cysteine 545, cysteine 500-cysteine 516, cysteine 503-cysteine 518, and cysteine 520-cysteine 529. The EGF-like domain occupies 499 to 530 (RCGPCFNNGKPILEGTSCRCQCSLGLQGPACE). One can recognise a TSP type-1 2 domain in the interval 540-584 (DGHWSCWGSWSPCTAGTRERRRECNNPAPQNGGAPCPGWRVQTQA). 3 C-linked (Man) tryptophan glycosylation sites follow: tryptophan 543, tryptophan 546, and tryptophan 549. Cystine bridges form between cysteine 552–cysteine 585 and cysteine 563–cysteine 575.

The protein belongs to the complement C6/C7/C8/C9 family. As to quaternary structure, heterotrimer of 3 chains: alpha (C8A), beta (C8B) and gamma (C8G); the alpha and gamma chains are disulfide bonded. Component of the membrane attack complex (MAC), composed of complement C5b, C6, C7, C8A, C8B, C8G and multiple copies of the pore-forming subunit C9.

The protein localises to the secreted. Its subcellular location is the target cell membrane. Its activity is regulated as follows. Membrane attack complex (MAC) assembly is inhibited by CD59, thereby protecting self-cells from damage during complement activation. CD59 acts by binding to the beta-haipins of C8 (C8A and C8B), forming an intermolecular beta-sheet that prevents incorporation of the multiple copies of C9 required for complete formation of the osmolytic pore. MAC assembly is also inhibited by clusterin (CLU) chaperones that inhibit polymerization of C9. Component of the membrane attack complex (MAC), a multiprotein complex activated by the complement cascade, which inserts into a target cell membrane and forms a pore, leading to target cell membrane rupture and cell lysis. The MAC is initiated by proteolytic cleavage of C5 into complement C5b in response to the classical, alternative, lectin and GZMK complement pathways. The complement pathways consist in a cascade of proteins that leads to phagocytosis and breakdown of pathogens and signaling that strengthens the adaptive immune system. C8A, together with C8B and C8G, inserts into the target membrane, but does not form pores by itself. During MAC assembly, associates with C5b, C6 and C7 to form the C5b8 intermediate complex that inserts into the target membrane and traverses the bilayer increasing membrane rigidity. This chain is Complement component C8 alpha chain (C8A), found in Oryctolagus cuniculus (Rabbit).